A 203-amino-acid chain; its full sequence is dITP/XTP pyrophosphatase (203 aa).

Position 8-13 (8-13) interacts with substrate; sequence TANKGK. Mg(2+)-binding residues include Glu-41 and Asp-70. Asp-70 (proton acceptor) is an active-site residue. Substrate contacts are provided by residues Ser-71, 153 to 156, Lys-176, and 181 to 182; these read FGYD and HR.

Belongs to the HAM1 NTPase family. As to quaternary structure, homodimer. It depends on Mg(2+) as a cofactor.

It catalyses the reaction XTP + H2O = XMP + diphosphate + H(+). The catalysed reaction is dITP + H2O = dIMP + diphosphate + H(+). The enzyme catalyses ITP + H2O = IMP + diphosphate + H(+). Functionally, pyrophosphatase that catalyzes the hydrolysis of nucleoside triphosphates to their monophosphate derivatives, with a high preference for the non-canonical purine nucleotides XTP (xanthosine triphosphate), dITP (deoxyinosine triphosphate) and ITP. Seems to function as a house-cleaning enzyme that removes non-canonical purine nucleotides from the nucleotide pool, thus preventing their incorporation into DNA/RNA and avoiding chromosomal lesions. This is dITP/XTP pyrophosphatase from Listeria monocytogenes serovar 1/2a (strain ATCC BAA-679 / EGD-e).